We begin with the raw amino-acid sequence, 375 residues long: Alcohol dehydrogenase 6 (375 aa).

Zn(2+)-binding residues include Cys47, His69, Cys99, Cys102, Cys105, Cys113, and Cys175. NAD(+) contacts are provided by residues 200-205 (GLGGVG), Asp224, Lys229, 293-295 (VGS), and Arg370.

Belongs to the zinc-containing alcohol dehydrogenase family. Class-V subfamily. As to quaternary structure, dimer. The cofactor is Zn(2+). Liver.

The protein resides in the cytoplasm. The enzyme catalyses a primary alcohol + NAD(+) = an aldehyde + NADH + H(+). The catalysed reaction is a secondary alcohol + NAD(+) = a ketone + NADH + H(+). Functionally, alcohol dehydrogenase. Catalyzes the NAD-dependent oxidation of primary alcohols to the corresponding aldehydes. Oxidizes secondary alcohols to the corresponding ketones. The polypeptide is Alcohol dehydrogenase 6 (ADH6) (Peromyscus maniculatus (North American deer mouse)).